The chain runs to 359 residues: Protein RecA (359 aa).

Position 73–80 (G73–T80) interacts with ATP.

This sequence belongs to the RecA family.

The protein localises to the cytoplasm. Its function is as follows. Can catalyze the hydrolysis of ATP in the presence of single-stranded DNA, the ATP-dependent uptake of single-stranded DNA by duplex DNA, and the ATP-dependent hybridization of homologous single-stranded DNAs. It interacts with LexA causing its activation and leading to its autocatalytic cleavage. The chain is Protein RecA from Desulfovibrio desulfuricans (strain ATCC 27774 / DSM 6949 / MB).